Consider the following 500-residue polypeptide: Bifunctional protein GlmU (500 aa).

Positions 1–242 (MPVQTAVVVL…SAKVAGANDR (242 aa)) are pyrophosphorylase. Residues 10–13 (LAAG), Lys24, Gln81, and 86–87 (GT) contribute to the UDP-N-acetyl-alpha-D-glucosamine site. Residue Asp112 coordinates Mg(2+). UDP-N-acetyl-alpha-D-glucosamine is bound by residues Gly151, Glu167, Asn182, and Asn240. Asn240 provides a ligand contact to Mg(2+). The linker stretch occupies residues 243–263 (VQLSRLAAELNRRTVENWMRA). The interval 264–500 (GVTVVDPSTT…KQDLKDGIEQ (237 aa)) is N-acetyltransferase. UDP-N-acetyl-alpha-D-glucosamine contacts are provided by Arg345 and Lys363. His375 (proton acceptor) is an active-site residue. UDP-N-acetyl-alpha-D-glucosamine is bound by residues Tyr378 and Asn389. Residues Ala392, 398-399 (NY), Ser417, and Ala435 each bind acetyl-CoA. The segment at 459–500 (DGWVQRNRPGTPAAEAASAAGPHHSSDLHETEKQDLKDGIEQ) is disordered. Residues 482-500 (HSSDLHETEKQDLKDGIEQ) are compositionally biased toward basic and acidic residues.

It in the N-terminal section; belongs to the N-acetylglucosamine-1-phosphate uridyltransferase family. This sequence in the C-terminal section; belongs to the transferase hexapeptide repeat family. In terms of assembly, homotrimer. It depends on Mg(2+) as a cofactor.

The protein resides in the cytoplasm. It catalyses the reaction alpha-D-glucosamine 1-phosphate + acetyl-CoA = N-acetyl-alpha-D-glucosamine 1-phosphate + CoA + H(+). The catalysed reaction is N-acetyl-alpha-D-glucosamine 1-phosphate + UTP + H(+) = UDP-N-acetyl-alpha-D-glucosamine + diphosphate. It functions in the pathway nucleotide-sugar biosynthesis; UDP-N-acetyl-alpha-D-glucosamine biosynthesis; N-acetyl-alpha-D-glucosamine 1-phosphate from alpha-D-glucosamine 6-phosphate (route II): step 2/2. Its pathway is nucleotide-sugar biosynthesis; UDP-N-acetyl-alpha-D-glucosamine biosynthesis; UDP-N-acetyl-alpha-D-glucosamine from N-acetyl-alpha-D-glucosamine 1-phosphate: step 1/1. The protein operates within bacterial outer membrane biogenesis; LPS lipid A biosynthesis. Catalyzes the last two sequential reactions in the de novo biosynthetic pathway for UDP-N-acetylglucosamine (UDP-GlcNAc). The C-terminal domain catalyzes the transfer of acetyl group from acetyl coenzyme A to glucosamine-1-phosphate (GlcN-1-P) to produce N-acetylglucosamine-1-phosphate (GlcNAc-1-P), which is converted into UDP-GlcNAc by the transfer of uridine 5-monophosphate (from uridine 5-triphosphate), a reaction catalyzed by the N-terminal domain. In Rhodococcus opacus (strain B4), this protein is Bifunctional protein GlmU.